A 154-amino-acid polypeptide reads, in one-letter code: Putative lipoprotein MAB_4074c (154 aa).

Positions 1-21 (MMNRVIVGAMGLLAAGAVVVG) are cleaved as a signal peptide. Cys22 carries the N-palmitoyl cysteine lipid modification. The S-diacylglycerol cysteine moiety is linked to residue Cys22.

Belongs to the mycobacterial 19 kDa antigen family.

The protein resides in the cell membrane. The chain is Putative lipoprotein MAB_4074c from Mycobacteroides abscessus (strain ATCC 19977 / DSM 44196 / CCUG 20993 / CIP 104536 / JCM 13569 / NCTC 13031 / TMC 1543 / L948) (Mycobacterium abscessus).